The sequence spans 275 residues: 3-methyl-2-oxobutanoate hydroxymethyltransferase (275 aa).

Mg(2+) contacts are provided by aspartate 51 and aspartate 90. Residues 51–52 (DS), aspartate 90, and lysine 120 each bind 3-methyl-2-oxobutanoate. Mg(2+) is bound at residue glutamate 122. Residue glutamate 189 is the Proton acceptor of the active site.

The protein belongs to the PanB family. As to quaternary structure, homodecamer; pentamer of dimers. Mg(2+) serves as cofactor.

It is found in the cytoplasm. The catalysed reaction is 3-methyl-2-oxobutanoate + (6R)-5,10-methylene-5,6,7,8-tetrahydrofolate + H2O = 2-dehydropantoate + (6S)-5,6,7,8-tetrahydrofolate. The protein operates within cofactor biosynthesis; (R)-pantothenate biosynthesis; (R)-pantoate from 3-methyl-2-oxobutanoate: step 1/2. Its function is as follows. Catalyzes the reversible reaction in which hydroxymethyl group from 5,10-methylenetetrahydrofolate is transferred onto alpha-ketoisovalerate to form ketopantoate. This is 3-methyl-2-oxobutanoate hydroxymethyltransferase from Caulobacter vibrioides (strain ATCC 19089 / CIP 103742 / CB 15) (Caulobacter crescentus).